Reading from the N-terminus, the 338-residue chain is Anthranilate phosphoribosyltransferase (338 aa).

5-phospho-alpha-D-ribose 1-diphosphate contacts are provided by residues Gly-78, 81-82 (GD), Thr-86, 88-91 (NIST), 106-114 (KHGNRSVSS), and Ser-118. Gly-78 is a binding site for anthranilate. Ser-90 serves as a coordination point for Mg(2+). An anthranilate-binding site is contributed by Asn-109. Arg-164 is an anthranilate binding site. Positions 223 and 224 each coordinate Mg(2+).

It belongs to the anthranilate phosphoribosyltransferase family. In terms of assembly, homodimer. It depends on Mg(2+) as a cofactor.

It carries out the reaction N-(5-phospho-beta-D-ribosyl)anthranilate + diphosphate = 5-phospho-alpha-D-ribose 1-diphosphate + anthranilate. It participates in amino-acid biosynthesis; L-tryptophan biosynthesis; L-tryptophan from chorismate: step 2/5. Catalyzes the transfer of the phosphoribosyl group of 5-phosphorylribose-1-pyrophosphate (PRPP) to anthranilate to yield N-(5'-phosphoribosyl)-anthranilate (PRA). The polypeptide is Anthranilate phosphoribosyltransferase (Bacillus licheniformis (strain ATCC 14580 / DSM 13 / JCM 2505 / CCUG 7422 / NBRC 12200 / NCIMB 9375 / NCTC 10341 / NRRL NRS-1264 / Gibson 46)).